We begin with the raw amino-acid sequence, 354 residues long: Bifunctional transcriptional activator/DNA repair enzyme Ada (354 aa).

The interval 1–171 (MKKATCLTDD…SSSYYRKADE (171 aa)) is methylphosphotriester-DNA--protein-cysteine methyltransferase. Position 34 (Thr-34) interacts with DNA. Catalysis depends on Cys-38, which acts as the Nucleophile; methyl group acceptor from methylphosphotriester. Residues Cys-38 and Cys-42 each coordinate Zn(2+). DNA is bound by residues Arg-43, Arg-45, and Arg-67. Cys-69 and Cys-72 together coordinate Zn(2+). The 99-residue stretch at 85-183 (DKITHACRLL…GMTAKQFRHG (99 aa)) folds into the HTH araC/xylS-type domain. The H-T-H motif DNA-binding region spans 102-121 (LEALADQVAMSPFHLHRLFK). Positions 181 to 354 (RHGGENLAVR…LRREAENEER (174 aa)) are methylated-DNA--protein-cysteine methyltransferase. Residue Cys-321 is the Nucleophile; methyl group acceptor from either O6-methylguanine or O4-methylthymine of the active site.

In the C-terminal section; belongs to the MGMT family. Requires Zn(2+) as cofactor.

The catalysed reaction is (2'-deoxyribonucleoside 5'-methylphosphotriester)-DNA + L-cysteinyl-[protein] = 2'-deoxyribonucleotide-DNA + S-methyl-L-cysteinyl-[protein] + H(+). The enzyme catalyses a 6-O-methyl-2'-deoxyguanosine in DNA + L-cysteinyl-[protein] = S-methyl-L-cysteinyl-[protein] + a 2'-deoxyguanosine in DNA. It carries out the reaction a 4-O-methyl-thymidine in DNA + L-cysteinyl-[protein] = a thymidine in DNA + S-methyl-L-cysteinyl-[protein]. Involved in the adaptive response to alkylation damage in DNA caused by alkylating agents. Repairs O6-methylguanine (O6-MeG) and O4-methylthymine (O4-MeT) in DNA. Repairs the methylated nucleobase in DNA by stoichiometrically transferring the methyl group to a cysteine residue in the enzyme (Cys-321). Also specifically repairs the Sp diastereomer of DNA methylphosphotriester lesions by the same mechanism, although the methyl transfer occurs onto a different cysteine residue (Cys-38). Cannot demethylate the other diastereomer, Rp-methylphosphotriester. This is a suicide reaction: the enzyme is irreversibly inactivated. In terms of biological role, the methylation of Ada by methylphosphotriesters in DNA leads to its activation as a transcriptional regulator that activates the transcription of its own gene, ada, and other alkylation resistance genes, alkA, alkB and aidB. The chain is Bifunctional transcriptional activator/DNA repair enzyme Ada (ada) from Escherichia coli (strain K12).